A 248-amino-acid polypeptide reads, in one-letter code: ATP synthase subunit a, chloroplastic (248 aa).

The next 5 helical transmembrane spans lie at 37–57, 96–116, 135–155, 200–220, and 221–241; these read AQVL…AVLA, VPFI…GALF, INTT…AGLH, LVVA…MMFL, and GLFT…AYIG.

The protein belongs to the ATPase A chain family. F-type ATPases have 2 components, CF(1) - the catalytic core - and CF(0) - the membrane proton channel. CF(1) has five subunits: alpha(3), beta(3), gamma(1), delta(1), epsilon(1). CF(0) has four main subunits: a, b, b' and c.

It is found in the plastid. Its subcellular location is the chloroplast thylakoid membrane. Key component of the proton channel; it plays a direct role in the translocation of protons across the membrane. In Marchantia polymorpha (Common liverwort), this protein is ATP synthase subunit a, chloroplastic.